The sequence spans 207 residues: Small ribosomal subunit protein bS6c (207 aa).

The N-terminal 59 residues, Met-1–Leu-59, are a transit peptide targeting the chloroplast. Positions Gly-69 to Gly-99 are disordered. Low complexity predominate over residues Thr-77–Thr-86.

It belongs to the bacterial ribosomal protein bS6 family. Part of the 30S ribosomal subunit.

It localises to the plastid. Its subcellular location is the chloroplast. Functionally, binds together with bS18 to 16S ribosomal RNA. The polypeptide is Small ribosomal subunit protein bS6c (RPS6) (Arabidopsis thaliana (Mouse-ear cress)).